Consider the following 306-residue polypeptide: 2-phosphoglycerate kinase (306 aa).

The region spanning 1 to 90 is the ATP-cone domain; sequence MIMVQGEVSG…LWRKIRQCKE (90 aa).

This sequence belongs to the 2-phosphoglycerate kinase family. The cofactor is a divalent metal cation.

It catalyses the reaction (2R)-2-phosphoglycerate + ATP = (2R)-2,3-bisphosphoglycerate + ADP + H(+). The protein operates within thermoadapter biosynthesis; cyclic 2,3-diphosphoglycerate biosynthesis; cyclic 2,3-diphosphoglycerate from 2-phospho-D-glycerate: step 1/2. Its function is as follows. Catalyzes the phosphorylation of 2-phosphoglycerate to 2,3-diphosphoglycerate. Involved in the biosynthesis of cyclic 2,3-bisphosphoglycerate, a thermoprotectant. This Methanothermobacter thermautotrophicus (strain ATCC 29096 / DSM 1053 / JCM 10044 / NBRC 100330 / Delta H) (Methanobacterium thermoautotrophicum) protein is 2-phosphoglycerate kinase.